The sequence spans 448 residues: Cysteine--tRNA ligase (448 aa).

Cysteine 27 contacts Zn(2+). A 'HIGH' region motif is present at residues 29–39 (PTVYNYIHVGN). Cysteine 210, histidine 235, and glutamate 239 together coordinate Zn(2+). Residues 267–271 (KMSKS) carry the 'KMSKS' region motif. Lysine 270 serves as a coordination point for ATP.

The protein belongs to the class-I aminoacyl-tRNA synthetase family. As to quaternary structure, monomer. The cofactor is Zn(2+).

Its subcellular location is the cytoplasm. It carries out the reaction tRNA(Cys) + L-cysteine + ATP = L-cysteinyl-tRNA(Cys) + AMP + diphosphate. This chain is Cysteine--tRNA ligase, found in Lactococcus lactis subsp. cremoris (strain MG1363).